Consider the following 221-residue polypeptide: Small ribosomal subunit protein uS5 (221 aa).

The 64-residue stretch at Ile-46–Ile-109 folds into the S5 DRBM domain.

This sequence belongs to the universal ribosomal protein uS5 family. In terms of assembly, part of the 30S ribosomal subunit. Contacts protein S4.

Its function is as follows. With S4 and S12 plays an important role in translational accuracy. This is Small ribosomal subunit protein uS5 from Thermoplasma volcanium (strain ATCC 51530 / DSM 4299 / JCM 9571 / NBRC 15438 / GSS1).